Consider the following 339-residue polypeptide: Anthranilate phosphoribosyltransferase (339 aa).

Residues Gly79, 82–83 (GD), Ser87, 89–92 (NIST), 107–115 (KHGNRSVSS), and Ser119 each bind 5-phospho-alpha-D-ribose 1-diphosphate. Gly79 is an anthranilate binding site. Ser91 contributes to the Mg(2+) binding site. Position 110 (Asn110) interacts with anthranilate. Residue Arg165 coordinates anthranilate. Positions 224 and 225 each coordinate Mg(2+).

It belongs to the anthranilate phosphoribosyltransferase family. As to quaternary structure, homodimer. Requires Mg(2+) as cofactor.

The catalysed reaction is N-(5-phospho-beta-D-ribosyl)anthranilate + diphosphate = 5-phospho-alpha-D-ribose 1-diphosphate + anthranilate. It participates in amino-acid biosynthesis; L-tryptophan biosynthesis; L-tryptophan from chorismate: step 2/5. In terms of biological role, catalyzes the transfer of the phosphoribosyl group of 5-phosphorylribose-1-pyrophosphate (PRPP) to anthranilate to yield N-(5'-phosphoribosyl)-anthranilate (PRA). The protein is Anthranilate phosphoribosyltransferase of Exiguobacterium sibiricum (strain DSM 17290 / CCUG 55495 / CIP 109462 / JCM 13490 / 255-15).